A 1161-amino-acid chain; its full sequence is Integrin alpha-D (1161 aa).

Positions 1–17 (MTFGTVLLLSVLASYHG) are cleaved as a signal peptide. The Extracellular segment spans residues 18-1099 (FNLDVEEPTI…MVLEEDEVYN (1082 aa)). FG-GAP repeat units follow at residues 19–76 (NLDV…MCQP) and 77–136 (IPLH…IIQT). Asn-59 is a glycosylation site (N-linked (GlcNAc...) asparagine). Cys-67 and Cys-74 form a disulfide bridge. 2 N-linked (GlcNAc...) asparagine glycosylation sites follow: Asn-87 and Asn-99. Cys-106 and Cys-124 are disulfide-bonded. Residues 150 to 332 (DIVFLIDGSG…SIQKQLQEKI (183 aa)) form the VWFA domain. 5 FG-GAP repeats span residues 339–390 (QSRA…PTFI), 391–442 (NMSQ…SRQW), 443–503 (RKKA…RVQW), 506–564 (DAVL…SGIS), and 569–629 (QRIA…FSPV). N-linked (GlcNAc...) asparagine glycosylation occurs at Asn-391. 11 residues coordinate Ca(2+): Asp-465, Asp-467, Asp-469, Asp-473, Asp-529, Asn-531, Asp-533, Asp-537, Asp-592, Asp-596, and Asp-600. Cysteines 654 and 709 form a disulfide. Residues Asn-690 and Asn-732 are each glycosylated (N-linked (GlcNAc...) asparagine). 2 disulfide bridges follow: Cys-768-Cys-774 and Cys-845-Cys-860. Residues Asn-872 and Asn-956 are each glycosylated (N-linked (GlcNAc...) asparagine). Cystine bridges form between Cys-993-Cys-1017 and Cys-1022-Cys-1027. Asn-1045 carries an N-linked (GlcNAc...) asparagine glycan. A helical membrane pass occupies residues 1100–1120 (AIPIIMGSSVGALLLLALITA). The Cytoplasmic segment spans residues 1121–1161 (TLYKLGFFKRHYKEMLEDKPEDTATFSGDDFSCVAPNVPLS). The short motif at 1126–1130 (GFFKR) is the GFFKR motif element.

Belongs to the integrin alpha chain family. Heterodimer of an alpha and a beta subunit. Alpha-D associates with beta-2. Expressed moderately on myelomonocytic cell lines and subsets of peripheral blood leukocytes and strongly on tissue-specialized cells, including macrophages foam cells within atherosclerotic plaques, and on splenic red pulp macrophages.

Its subcellular location is the membrane. Functionally, integrin alpha-D/beta-2 is a receptor for ICAM3 and VCAM1. May play a role in the atherosclerotic process such as clearing lipoproteins from plaques and in phagocytosis of blood-borne pathogens, particulate matter, and senescent erythrocytes from the blood. The protein is Integrin alpha-D (ITGAD) of Homo sapiens (Human).